Consider the following 140-residue polypeptide: Large ribosomal subunit protein uL3 (140 aa).

It belongs to the universal ribosomal protein uL3 family. Part of the 50S ribosomal subunit. Forms a cluster with proteins L14 and L19.

In terms of biological role, one of the primary rRNA binding proteins, it binds directly near the 3'-end of the 23S rRNA, where it nucleates assembly of the 50S subunit. The sequence is that of Large ribosomal subunit protein uL3 (rplC) from Planobispora rosea.